Consider the following 768-residue polypeptide: U-box domain-containing protein 45 (768 aa).

The U-box domain occupies Val278 to Gln352. 5 ARM repeats span residues Glu454–Val497, Asn500–Glu540, Lys542–Thr579, Pro581–Leu620, and Ala623–Asn662.

Binds to SD129.

The enzyme catalyses S-ubiquitinyl-[E2 ubiquitin-conjugating enzyme]-L-cysteine + [acceptor protein]-L-lysine = [E2 ubiquitin-conjugating enzyme]-L-cysteine + N(6)-ubiquitinyl-[acceptor protein]-L-lysine.. It participates in protein modification; protein ubiquitination. Functions as an E3 ubiquitin ligase. The sequence is that of U-box domain-containing protein 45 (PUB45) from Arabidopsis thaliana (Mouse-ear cress).